We begin with the raw amino-acid sequence, 257 residues long: Exosome complex component Rrp4 (257 aa).

The region spanning 65-137 is the S1 motif domain; sequence GDNVLGKIVD…EVNQIDLTTK (73 aa). Residues 147-206 form the KH domain; that stretch reads RGGQLVTITPSKVPRLIGKGGSMINMIKTLTGTRIIVGQNGWVWVSGKNDELERLAIEAI.

This sequence belongs to the RRP4 family. In terms of assembly, component of the archaeal exosome complex. Forms a trimer of Rrp4 and/or Csl4 subunits. The trimer associates with a hexameric ring-like arrangement composed of 3 Rrp41-Rrp42 heterodimers.

Its subcellular location is the cytoplasm. In terms of biological role, non-catalytic component of the exosome, which is a complex involved in RNA degradation. Increases the RNA binding and the efficiency of RNA degradation. Confers strong poly(A) specificity to the exosome. The protein is Exosome complex component Rrp4 of Thermococcus kodakarensis (strain ATCC BAA-918 / JCM 12380 / KOD1) (Pyrococcus kodakaraensis (strain KOD1)).